A 304-amino-acid polypeptide reads, in one-letter code: Sulfate adenylyltransferase subunit 2 (304 aa).

Belongs to the PAPS reductase family. CysD subfamily. Heterodimer composed of CysD, the smaller subunit, and CysN.

The enzyme catalyses sulfate + ATP + H(+) = adenosine 5'-phosphosulfate + diphosphate. The protein operates within sulfur metabolism; hydrogen sulfide biosynthesis; sulfite from sulfate: step 1/3. Functionally, with CysN forms the ATP sulfurylase (ATPS) that catalyzes the adenylation of sulfate producing adenosine 5'-phosphosulfate (APS) and diphosphate, the first enzymatic step in sulfur assimilation pathway. APS synthesis involves the formation of a high-energy phosphoric-sulfuric acid anhydride bond driven by GTP hydrolysis by CysN coupled to ATP hydrolysis by CysD. The polypeptide is Sulfate adenylyltransferase subunit 2 (Acinetobacter baylyi (strain ATCC 33305 / BD413 / ADP1)).